The primary structure comprises 190 residues: Molybdenum cofactor guanylyltransferase (190 aa).

GTP contacts are provided by residues 10–12 (LAG), lysine 23, asparagine 51, aspartate 69, and aspartate 99. A Mg(2+)-binding site is contributed by aspartate 99.

This sequence belongs to the MobA family. Monomer. Requires Mg(2+) as cofactor.

The protein localises to the cytoplasm. The catalysed reaction is Mo-molybdopterin + GTP + H(+) = Mo-molybdopterin guanine dinucleotide + diphosphate. Its function is as follows. Transfers a GMP moiety from GTP to Mo-molybdopterin (Mo-MPT) cofactor (Moco or molybdenum cofactor) to form Mo-molybdopterin guanine dinucleotide (Mo-MGD) cofactor. This Mannheimia succiniciproducens (strain KCTC 0769BP / MBEL55E) protein is Molybdenum cofactor guanylyltransferase.